The primary structure comprises 197 residues: Recombination protein RecR (197 aa).

A C4-type zinc finger spans residues 57 to 72 (CSRCGYLTDFDPCLIC). Residues 80 to 174 (SLICIGEESS…KVTRLAHGLP (95 aa)) form the Toprim domain.

Belongs to the RecR family.

May play a role in DNA repair. It seems to be involved in an RecBC-independent recombinational process of DNA repair. It may act with RecF and RecO. The sequence is that of Recombination protein RecR from Syntrophomonas wolfei subsp. wolfei (strain DSM 2245B / Goettingen).